The sequence spans 445 residues: METIFAQSSAFGKAGVAVFRISGPKSLEVLQLLTGKKAFKPRLMYYQQIIAPETKELIDNAMVVYFKLPNSFTGEDVVEIHTHGSKAISIMMINTLLNISDIRLAEAGEFTKRAFLNNKFDLTAAEGIADLINAETIMQHRQAIRQASGRLEELYNSWRSQLLKIISLLEAYIDFPDEDIPDSVLNDVNNTHKNLVNEISNYLNDNRRGELLNSGLKLAIVGPPNTGKSSLLNFLMQRDIAMVSNIAGTTRDIIEGHLDIGGYPIILQDTAGIREESSDIIEQEGIKRAINSAKTADIKIIMFDAKKLDSSINEDITGLIDENTIVIINKIDLIEPSKVFSIEDKYKCLRVSVKNNIALSSILKNIENIAENMAGFTETPYITNQRHRHYLKQALSHLTDFSLDNDLVLATEDIRITARCIGAITGVINVEEILGEIFQNFCIGK.

3 residues coordinate (6S)-5-formyl-5,6,7,8-tetrahydrofolate: arginine 20, glutamate 79, and lysine 119. Residues 215–371 (GLKLAIVGPP…ILKNIENIAE (157 aa)) form the TrmE-type G domain. Asparagine 225 provides a ligand contact to K(+). GTP is bound by residues 225 to 230 (NTGKSS), 244 to 250 (SNIAGTT), and 269 to 272 (DTAG). Mg(2+) is bound at residue serine 229. The K(+) site is built by serine 244, isoleucine 246, and threonine 249. Residue threonine 250 participates in Mg(2+) binding. Lysine 445 contributes to the (6S)-5-formyl-5,6,7,8-tetrahydrofolate binding site.

It belongs to the TRAFAC class TrmE-Era-EngA-EngB-Septin-like GTPase superfamily. TrmE GTPase family. As to quaternary structure, homodimer. Heterotetramer of two MnmE and two MnmG subunits. Requires K(+) as cofactor.

It is found in the cytoplasm. Functionally, exhibits a very high intrinsic GTPase hydrolysis rate. Involved in the addition of a carboxymethylaminomethyl (cmnm) group at the wobble position (U34) of certain tRNAs, forming tRNA-cmnm(5)s(2)U34. The protein is tRNA modification GTPase MnmE of Rickettsia akari (strain Hartford).